A 168-amino-acid chain; its full sequence is Mesencephalic astrocyte-derived neurotrophic factor homolog (168 aa).

The N-terminal stretch at Met1–Ala17 is a signal peptide. 4 disulfides stabilise this stretch: Cys22–Cys109, Cys25–Cys97, Cys55–Cys66, and Cys143–Cys146.

Belongs to the ARMET family. As to expression, expressed in the intestine, spermatheca and nervous system. Expressed in the hypoderm. Expressed in structures of the excretory system. Not expressed in the male gonad.

The protein resides in the secreted. It localises to the endoplasmic reticulum lumen. Inhibits endoplasmic reticulum (ER) stress response. Retained in the ER under normal conditions and is up-regulated and secreted by the ER in response to ER stress and hypoxia. Following secretion by the ER, directly binds to 3-O-sulfogalactosylceramide, a lipid sulfatide in the outer cell membrane of target cells. Sulfatide binding promotes its cellular uptake by endocytosis, and is required for its role in alleviating ER stress under ER stress conditions. Has a neuroprotective role, ensuring survival of dopaminergic neurons during normal growth. This chain is Mesencephalic astrocyte-derived neurotrophic factor homolog, found in Caenorhabditis elegans.